The sequence spans 339 residues: MLEQLPYLALKTPPKTTALLKAECADFIVKEHLGYEMSGDGEFVALYVRKTDCNTLFVGEKLAKFAGVSERNMGYAGLKDRRAVTEQWFCLQMPGMETPDFSQFELDGVEILTVTRHNRKIRTGSLEGNYFDILLRGAEESDELKVRLDFVANFGFPNYFTEQRFGREGHNLTQALRWAQGEIKVKDRKKRSFYLSAARSEIFNLVVAARIAKGATNQVLPNDIVQLAGSHSWFKADEKEDLTVLQVRLENQDILLTAPLIGEDILAASDIENEIVNQHSAFDSLMKQERMKAVRRPLLMKAKGFSWAFEPEGLRLKFYLPAGSYATALVRELVNYTEE.

The active-site Nucleophile is the D80. The 157-residue stretch at 155–311 (GFPNYFTEQR…AKGFSWAFEP (157 aa)) folds into the TRUD domain.

It belongs to the pseudouridine synthase TruD family.

It carries out the reaction uridine(13) in tRNA = pseudouridine(13) in tRNA. Its function is as follows. Responsible for synthesis of pseudouridine from uracil-13 in transfer RNAs. This is tRNA pseudouridine synthase D from Haemophilus influenzae (strain 86-028NP).